The sequence spans 331 residues: Type 2 lactosamine alpha-2,3-sialyltransferase (331 aa).

At 1–4 (MKGY) the chain is on the cytoplasmic side. The chain crosses the membrane as a helical; Signal-anchor for type II membrane protein span at residues 5–25 (VVAIFLSSIFLYYVLYCILWG). Residues 26 to 331 (TNGYWFPNEE…KKMVINLTQN (306 aa)) are Lumenal-facing. Residues Asn-129, Asn-181, Asn-295, Asn-308, and Asn-327 are each glycosylated (N-linked (GlcNAc...) asparagine).

The protein belongs to the glycosyltransferase 29 family.

It is found in the golgi apparatus membrane. The enzyme catalyses a neolactoside nLc4Cer(d18:1(4E)) + CMP-N-acetyl-beta-neuraminate = a neolactoside IV(3)-alpha-NeuAc-nLc4Cer(d18:1(4E)) + CMP + H(+). It catalyses the reaction a beta-D-galactosyl-(1-&gt;4)-N-acetyl-beta-D-glucosaminyl derivative + CMP-N-acetyl-beta-neuraminate = an N-acetyl-alpha-neuraminyl-(2-&gt;3)-beta-D-galactosyl-(1-&gt;4)-N-acetyl-beta-D-glucosaminyl derivative + CMP + H(+). The catalysed reaction is a neolactoside nLc6Cer(d18:1(4E)) + CMP-N-acetyl-beta-neuraminate = a neolactoside VI(3)-alpha-NeuNAc-nLc6Cer(d18:1(4E)) + CMP + H(+). Transfers the sialyl residue from CMP-N-acetyl-beta-neuraminate to the terminal galactose residue on sugar chains of glycoproteins and glycolipids. It's alpha-2,3-sialyltransferase activity is specific toward type II glycan chains (Galbeta1-4GlcNAc) on glycoproteins and glycolipids such as neolactosides nLc4Cer and nLc6Cer, whose sialyl-products serve as precursors for the Lewis X antigen. Critically involved in the synthesis of functional selectin ligands needed for neutrophil recruitment during inflammation and lymphocyte homing to the lymph nodes. The chain is Type 2 lactosamine alpha-2,3-sialyltransferase (St3gal6) from Rattus norvegicus (Rat).